The primary structure comprises 318 residues: Glycine--tRNA ligase alpha subunit (318 aa).

Belongs to the class-II aminoacyl-tRNA synthetase family. In terms of assembly, tetramer of two alpha and two beta subunits.

The protein localises to the cytoplasm. The catalysed reaction is tRNA(Gly) + glycine + ATP = glycyl-tRNA(Gly) + AMP + diphosphate. This is Glycine--tRNA ligase alpha subunit from Chelativorans sp. (strain BNC1).